A 126-amino-acid polypeptide reads, in one-letter code: Aspartate 1-decarboxylase (126 aa).

Ser-25 serves as the catalytic Schiff-base intermediate with substrate; via pyruvic acid. Pyruvic acid (Ser) is present on Ser-25. Residue Thr-57 participates in substrate binding. The active-site Proton donor is Tyr-58. 73–75 (GGA) contacts substrate.

It belongs to the PanD family. In terms of assembly, heterooctamer of four alpha and four beta subunits. The cofactor is pyruvate. Is synthesized initially as an inactive proenzyme, which is activated by self-cleavage at a specific serine bond to produce a beta-subunit with a hydroxyl group at its C-terminus and an alpha-subunit with a pyruvoyl group at its N-terminus.

The protein resides in the cytoplasm. The catalysed reaction is L-aspartate + H(+) = beta-alanine + CO2. Its pathway is cofactor biosynthesis; (R)-pantothenate biosynthesis; beta-alanine from L-aspartate: step 1/1. Functionally, catalyzes the pyruvoyl-dependent decarboxylation of aspartate to produce beta-alanine. The sequence is that of Aspartate 1-decarboxylase from Xanthomonas campestris pv. campestris (strain ATCC 33913 / DSM 3586 / NCPPB 528 / LMG 568 / P 25).